The sequence spans 369 residues: Ferredoxin--NADP reductase 2 (369 aa).

Residues Met-1–Pro-21 form a disordered region. FAD contacts are provided by Asp-58, Gln-66, Tyr-71, Val-111, Phe-146, Asp-311, and Thr-352.

It belongs to the ferredoxin--NADP reductase type 2 family. In terms of assembly, homodimer. FAD serves as cofactor.

It catalyses the reaction 2 reduced [2Fe-2S]-[ferredoxin] + NADP(+) + H(+) = 2 oxidized [2Fe-2S]-[ferredoxin] + NADPH. In Cupriavidus taiwanensis (strain DSM 17343 / BCRC 17206 / CCUG 44338 / CIP 107171 / LMG 19424 / R1) (Ralstonia taiwanensis (strain LMG 19424)), this protein is Ferredoxin--NADP reductase 2.